A 393-amino-acid chain; its full sequence is Diphosphomevalonate decarboxylase (393 aa).

Residues 21–24, Arg77, 156–161, and Thr212 each bind (R)-5-diphosphomevalonate; these read YWGK and SGSACR.

Belongs to the diphosphomevalonate decarboxylase family. In terms of assembly, homodimer.

It localises to the cytoplasm. Its subcellular location is the nucleus. The enzyme catalyses (R)-5-diphosphomevalonate + ATP = isopentenyl diphosphate + ADP + phosphate + CO2. The protein operates within isoprenoid biosynthesis; isopentenyl diphosphate biosynthesis via mevalonate pathway; isopentenyl diphosphate from (R)-mevalonate: step 3/3. In terms of biological role, diphosphomevalonate decarboxylase; part of the second module of ergosterol biosynthesis pathway that includes the middle steps of the pathway. Mvd1 converts diphosphomevalonate into isopentenyl diphosphate. The second module is carried out in the vacuole and involves the formation of farnesyl diphosphate, which is also an important intermediate in the biosynthesis of ubiquinone, dolichol, heme and prenylated proteins. Activity by the mevalonate kinase erg12 first converts mevalonate into 5-phosphomevalonate. 5-phosphomevalonate is then further converted to 5-diphosphomevalonate by the phosphomevalonate kinase erg8. The diphosphomevalonate decarboxylase mvd1 then produces isopentenyl diphosphate. The isopentenyl-diphosphate delta-isomerase idi1 then catalyzes the 1,3-allylic rearrangement of the homoallylic substrate isopentenyl (IPP) to its highly electrophilic allylic isomer, dimethylallyl diphosphate (DMAPP). Finally the farnesyl diphosphate synthase fps1 catalyzes the sequential condensation of isopentenyl pyrophosphate with dimethylallyl pyrophosphate, and then with the resultant geranylpyrophosphate to the ultimate product farnesyl pyrophosphate. This is Diphosphomevalonate decarboxylase (mvd1) from Schizosaccharomyces pombe (strain 972 / ATCC 24843) (Fission yeast).